A 789-amino-acid polypeptide reads, in one-letter code: Cadherin-10 (789 aa).

Positions 1-22 (MTIQQVLLLLLLWMWLLHPCRT) are cleaved as a signal peptide. Residues 23-54 (EMLFRRTPDLRPKGFVGRTSGSDGKALHRQKR) constitute a propeptide that is removed on maturation. 5 Cadherin domains span residues 55–160 (GWMW…EPTF), 161–269 (PEEI…PPRF), 270–384 (PQST…PPVF), 385–487 (SRSS…DNAP), and 488–606 (QFAV…LLLP). Residues 55–606 (GWMWNQFFLL…SCNAEALLLP (552 aa)) are Extracellular-facing. An N-linked (GlcNAc...) asparagine glycan is attached at N256. 3 N-linked (GlcNAc...) asparagine glycosylation sites follow: N438, N456, and N534. The chain crosses the membrane as a helical span at residues 607–634 (AGLSTGALIAILLCIIILLVIVVLFAAL). Residues 635–789 (KRQRKKEPLI…GGGESDKDAS (155 aa)) lie on the Cytoplasmic side of the membrane.

The protein localises to the cell membrane. In terms of biological role, cadherins are calcium-dependent cell adhesion proteins. They preferentially interact with themselves in a homophilic manner in connecting cells; cadherins may thus contribute to the sorting of heterogeneous cell types. In Gallus gallus (Chicken), this protein is Cadherin-10 (CDH10).